Consider the following 124-residue polypeptide: Small ribosomal subunit protein uS12 (124 aa).

At Asp-89 the chain carries 3-methylthioaspartic acid.

It belongs to the universal ribosomal protein uS12 family. Part of the 30S ribosomal subunit. Contacts proteins S8 and S17. May interact with IF1 in the 30S initiation complex.

With S4 and S5 plays an important role in translational accuracy. In terms of biological role, interacts with and stabilizes bases of the 16S rRNA that are involved in tRNA selection in the A site and with the mRNA backbone. Located at the interface of the 30S and 50S subunits, it traverses the body of the 30S subunit contacting proteins on the other side and probably holding the rRNA structure together. The combined cluster of proteins S8, S12 and S17 appears to hold together the shoulder and platform of the 30S subunit. This chain is Small ribosomal subunit protein uS12, found in Buchnera aphidicola subsp. Schizaphis graminum (strain Sg).